Consider the following 949-residue polypeptide: Probable transcriptional regulatory protein STB4 (949 aa).

The segment at residues 87 to 113 is a DNA-binding region (zn(2)-C6 fungal-type); sequence CELCKKRKVKCDGNNPCLNCSKHQKEC. Low complexity-rich tracts occupy residues 164 to 178 and 200 to 212; these read DGVS…NPNS and SGSN…NNNS. Disordered regions lie at residues 164 to 214 and 862 to 888; these read DGVS…NSFP and GERE…ATRS. The span at 862 to 874 shows a compositional bias: basic and acidic residues; sequence GEREENADERQEN.

The protein resides in the nucleus. Its function is as follows. Binds to SIN3. This is Probable transcriptional regulatory protein STB4 (STB4) from Saccharomyces cerevisiae (strain ATCC 204508 / S288c) (Baker's yeast).